The primary structure comprises 135 residues: uncharacterized protein (135 aa).

One can recognise an HTH merR-type domain in the interval 2–71 (TYTTAKAAEK…LKDIKRFAEC (70 aa)). Residues 5-24 (TAKAAEKIGISAYTLRFYDK) constitute a DNA-binding region (H-T-H motif).

This is an uncharacterized protein from Haemophilus influenzae (strain ATCC 51907 / DSM 11121 / KW20 / Rd).